We begin with the raw amino-acid sequence, 525 residues long: Peptide chain release factor 3 (525 aa).

A tr-type G domain is found at 11–279; sequence NNRRTFAIIS…AYLKYAPKPA (269 aa). GTP contacts are provided by residues 20 to 27, 88 to 92, and 142 to 145; these read SHPDAGKT, DTPGH, and NKLD.

It belongs to the TRAFAC class translation factor GTPase superfamily. Classic translation factor GTPase family. PrfC subfamily.

It is found in the cytoplasm. Increases the formation of ribosomal termination complexes and stimulates activities of RF-1 and RF-2. It binds guanine nucleotides and has strong preference for UGA stop codons. It may interact directly with the ribosome. The stimulation of RF-1 and RF-2 is significantly reduced by GTP and GDP, but not by GMP. This is Peptide chain release factor 3 from Ligilactobacillus salivarius (strain UCC118) (Lactobacillus salivarius).